A 215-amino-acid polypeptide reads, in one-letter code: GTP-binding nuclear protein Ran (215 aa).

Residues 6–170 (DIPTFKLVLV…LWLARKLLGD (165 aa)) enclose the Small GTPase Ran-type domain. GTP-binding positions include 17-24 (DGGTGKTT), 35-41 (EKKYVAT), Gly-67, 121-124 (NKVD), and 149-151 (SAK). The interval 36 to 44 (KKYVATLGV) is switch-I. The interval 67-83 (GQEKFGGLRDGYYIQGQ) is switch-II.

The protein belongs to the small GTPase superfamily. Ran family. In terms of assembly, found in a nuclear export complex with RanGTP, exportin and pre-miRNA.

It localises to the nucleus. In terms of biological role, GTP-binding protein involved in nucleocytoplasmic transport. Required for the import of protein into the nucleus and also for RNA export. Involved in chromatin condensation and control of cell cycle. The sequence is that of GTP-binding nuclear protein Ran from Brugia malayi (Filarial nematode worm).